An 86-amino-acid chain; its full sequence is Trypsin inhibitor (86 aa).

Cystine bridges form between cysteine 8–cysteine 65 and cysteine 49–cysteine 58.

Its function is as follows. Serine protease inhibitor which is active against trypsin. Displays strong antifungal activity against a number of phytopathogenic fungi including M.melonis, A.cucumerina, A.solani, C.glaeosporioides and P.capsici. This is Trypsin inhibitor from Fagopyrum tataricum (Tartarian buckwheat).